The following is a 451-amino-acid chain: Signal transduction histidine-protein kinase ArlS (451 aa).

2 helical membrane-spanning segments follow: residues 11 to 31 (IIVTTMITFVTIFLFCLIIIF) and 156 to 176 (IIALAFGVIATIITATISYVF). One can recognise an HAMP domain in the interval 178–231 (TQITKPLVSLSNKMIEIRRDGFQNKLQLNTNYEEIDNLANTFNEMMSQIEESFN). The 213-residue stretch at 239–451 (DASHELRTPL…NKGTTFKIIF (213 aa)) folds into the Histidine kinase domain. Position 242 is a phosphohistidine; by autocatalysis (His242).

Post-translationally, autophosphorylated.

Its subcellular location is the cell membrane. The enzyme catalyses ATP + protein L-histidine = ADP + protein N-phospho-L-histidine.. Its function is as follows. Member of the two-component regulatory system ArlS/ArlR involved in the regulation of adhesion, autolysis, multidrug resistance and virulence. ArlS probably functions as a sensor protein kinase which is autophosphorylated at a histidine residue and transfers its phosphate group to ArlR. The sequence is that of Signal transduction histidine-protein kinase ArlS (arlS) from Staphylococcus aureus (strain bovine RF122 / ET3-1).